A 452-amino-acid chain; its full sequence is CCA-adding enzyme (452 aa).

ATP contacts are provided by serine 54 and arginine 57. Serine 54 and arginine 57 together coordinate CTP. Residues aspartate 66, aspartate 68, and aspartate 117 each coordinate Mg(2+). The ATP site is built by histidine 140, lysine 160, and tyrosine 169. Histidine 140, lysine 160, and tyrosine 169 together coordinate CTP.

Belongs to the tRNA nucleotidyltransferase/poly(A) polymerase family. Archaeal CCA-adding enzyme subfamily. In terms of assembly, homodimer. Requires Mg(2+) as cofactor.

The enzyme catalyses a tRNA precursor + 2 CTP + ATP = a tRNA with a 3' CCA end + 3 diphosphate. It catalyses the reaction a tRNA with a 3' CCA end + 2 CTP + ATP = a tRNA with a 3' CCACCA end + 3 diphosphate. In terms of biological role, catalyzes the addition and repair of the essential 3'-terminal CCA sequence in tRNAs without using a nucleic acid template. Adds these three nucleotides in the order of C, C, and A to the tRNA nucleotide-73, using CTP and ATP as substrates and producing inorganic pyrophosphate. tRNA 3'-terminal CCA addition is required both for tRNA processing and repair. Also involved in tRNA surveillance by mediating tandem CCA addition to generate a CCACCA at the 3' terminus of unstable tRNAs. While stable tRNAs receive only 3'-terminal CCA, unstable tRNAs are marked with CCACCA and rapidly degraded. In Halobacterium salinarum (strain ATCC 29341 / DSM 671 / R1), this protein is CCA-adding enzyme.